The chain runs to 428 residues: Histone deacetylase 3 (428 aa).

A histone deacetylase region spans residues 3–316; the sequence is KTVAYFYDPD…WTYETSLLVE (314 aa). Positions 17, 21, and 25 each coordinate 1D-myo-inositol 1,4,5,6-tetrakisphosphate. The active site involves His135. Residues Asp170, His172, and Asp259 each coordinate Zn(2+). A 1D-myo-inositol 1,4,5,6-tetrakisphosphate-binding site is contributed by Arg265. Composition is skewed to basic and acidic residues over residues 388–405 and 415–428; these read DRTD…ENYS and DGDH…DVEI. The tract at residues 388–428 is disordered; that stretch reads DRTDEADAEERGPEENYSRPEAPNEFYDGDHDNDKESDVEI. At Ser424 the chain carries Phosphoserine.

This sequence belongs to the histone deacetylase family. HD type 1 subfamily. As to quaternary structure, interacts with HDAC7 and HDAC9. Interacts with DAXX, KDM4A, HDAC10 and DACH1. Found in a complex with NCOR1 and NCOR2. Component of the N-Cor repressor complex, at least composed of NCOR1, NCOR2, HDAC3, TBL1X, TBL1R, CORO2A and GPS2. Interacts with BCOR, MJD2A/JHDM3A, NRIP1, PRDM6 and SRY. Interacts with BTBD14B. Interacts with GLIS2. Interacts (via the DNA-binding domain) with NR2C1; the interaction recruits phosphorylated NR2C1 to PML bodies for sumoylation. Component of the Notch corepressor complex. Interacts with CBFA2T3 and NKAP. Interacts with APEX1; the interaction is not dependent on the acetylated status of APEX1. Interacts with ZMYND15. Interacts with SMRT/NCOR2 and BCL6 on DNA enhancer elements. Interacts with INSM1. Interacts with XBP1 isoform 1; the interaction occurs in endothelial cell (EC) under disturbed flow. Interacts (via C-terminus) with CCAR2 (via N-terminus). Interacts with and deacetylates MEF2D. Interacts with BEND3. Interacts with NKAPL. Interacts with DHX36; this interaction occurs in a RNA-dependent manner. Interacts weakly with CRY1; this interaction is enhanced in the presence of FBXL3. Interacts with FBXL3 and BMAL1. Interacts with NCOR1. Interacts with RARA. Interacts with SETD5. In terms of processing, sumoylated in vitro. Post-translationally, deubiquitinated on 'Lys-63'-linked ubiquitin chains by USP38; leading to a decreased level of histone acetylation.

The protein resides in the nucleus. It is found in the chromosome. Its subcellular location is the cytoplasm. It localises to the cytosol. It catalyses the reaction N(6)-acetyl-L-lysyl-[histone] + H2O = L-lysyl-[histone] + acetate. It carries out the reaction N(6)-acetyl-L-lysyl-[protein] + H2O = L-lysyl-[protein] + acetate. The catalysed reaction is N(6)-(2E)-butenoyl-L-lysyl-[protein] + H2O = (2E)-2-butenoate + L-lysyl-[protein]. The enzyme catalyses N(6)-(2-hydroxyisobutanoyl)-L-lysyl-[protein] + H2O = 2-hydroxy-2-methylpropanoate + L-lysyl-[protein]. It catalyses the reaction N(6)-[(S)-lactoyl]-L-lysyl-[protein] + H2O = (S)-lactate + L-lysyl-[protein]. With respect to regulation, inositol tetraphosphate (1D-myo-inositol 1,4,5,6-tetrakisphosphate) promotes the histone deacetylase activity by acting as an intermolecular glue between HDAC3 and NCOR2, thereby promoting its association with the N-Cor complex, a prerequisite for the histone deacetylase activity. Functionally, histone deacetylase that catalyzes the deacetylation of lysine residues on the N-terminal part of the core histones (H2A, H2B, H3 and H4), and some other non-histone substrates. Histone deacetylation gives a tag for epigenetic repression and plays an important role in transcriptional regulation, cell cycle progression and developmental events. Histone deacetylases act via the formation of large multiprotein complexes, such as N-Cor repressor complex, which activate the histone deacetylase activity. Participates in the BCL6 transcriptional repressor activity by deacetylating the H3 'Lys-27' (H3K27) on enhancer elements, antagonizing EP300 acetyltransferase activity and repressing proximal gene expression. Acts as a molecular chaperone for shuttling phosphorylated NR2C1 to PML bodies for sumoylation. Contributes, together with XBP1 isoform 1, to the activation of NFE2L2-mediated HMOX1 transcription factor gene expression in a PI(3)K/mTORC2/Akt-dependent signaling pathway leading to endothelial cell (EC) survival under disturbed flow/oxidative stress. Regulates both the transcriptional activation and repression phases of the circadian clock in a deacetylase activity-independent manner. During the activation phase, promotes the accumulation of ubiquitinated BMAL1 at the E-boxes and during the repression phase, blocks FBXL3-mediated CRY1/2 ubiquitination and promotes the interaction of CRY1 and BMAL1. The NCOR1-HDAC3 complex regulates the circadian expression of the core clock gene BMAL1 and the genes involved in lipid metabolism in the liver. Also functions as deacetylase for non-histone targets, such as KAT5, MEF2D, MAPK14, RARA and STAT3. Serves as a corepressor of RARA, mediating its deacetylation and repression, leading to inhibition of RARE DNA element binding. In addition to protein deacetylase activity, also acts as a protein-lysine deacylase by recognizing other acyl groups: catalyzes removal of (2E)-butenoyl (crotonyl), lactoyl (lactyl) and 2-hydroxyisobutanoyl (2-hydroxyisobutyryl) acyl groups from lysine residues, leading to protein decrotonylation, delactylation and de-2-hydroxyisobutyrylation, respectively. Catalyzes decrotonylation of MAPRE1/EB1. Mediates delactylation NBN/NBS1, thereby inhibiting DNA double-strand breaks (DSBs) via homologous recombination (HR). The protein is Histone deacetylase 3 of Mus musculus (Mouse).